A 335-amino-acid chain; its full sequence is Ferrochelatase (335 aa).

2 residues coordinate Fe cation: His-207 and Glu-288.

The protein belongs to the ferrochelatase family.

It localises to the cytoplasm. The enzyme catalyses heme b + 2 H(+) = protoporphyrin IX + Fe(2+). Its pathway is porphyrin-containing compound metabolism; protoheme biosynthesis; protoheme from protoporphyrin-IX: step 1/1. Its function is as follows. Catalyzes the ferrous insertion into protoporphyrin IX. The protein is Ferrochelatase of Helicobacter pylori (strain HPAG1).